The sequence spans 392 residues: Flavohemoprotein (392 aa).

Positions 1–139 (MLNAEQRAII…LADILIGAEE (139 aa)) constitute a Globin domain. Histidine 85 provides a ligand contact to heme b. Catalysis depends on charge relay system residues tyrosine 95 and glutamate 138. Residues 150–392 (GGWRGTREFR…EFFGPAAALE (243 aa)) form a reductase region. The FAD-binding FR-type domain occupies 153–256 (RGTREFRLVR…FPPAGDFTLA (104 aa)). FAD contacts are provided by residues tyrosine 191 and 205–208 (RNYS). 268–273 (GVGITP) lines the NADP(+) pocket. Residue 384–387 (FFGP) participates in FAD binding.

This sequence belongs to the globin family. Two-domain flavohemoproteins subfamily. The protein in the C-terminal section; belongs to the flavoprotein pyridine nucleotide cytochrome reductase family. Requires heme b as cofactor. FAD is required as a cofactor.

It catalyses the reaction 2 nitric oxide + NADPH + 2 O2 = 2 nitrate + NADP(+) + H(+). The enzyme catalyses 2 nitric oxide + NADH + 2 O2 = 2 nitrate + NAD(+) + H(+). Functionally, is involved in NO detoxification in an aerobic process, termed nitric oxide dioxygenase (NOD) reaction that utilizes O(2) and NAD(P)H to convert NO to nitrate, which protects the bacterium from various noxious nitrogen compounds. Therefore, plays a central role in the inducible response to nitrosative stress. The sequence is that of Flavohemoprotein from Pseudomonas putida (strain ATCC 47054 / DSM 6125 / CFBP 8728 / NCIMB 11950 / KT2440).